Reading from the N-terminus, the 52-residue chain is Disintegrin multisquamatin (52 aa).

Residues 1–50 form the Disintegrin domain; it reads EGEECESGPCCRNCKFLKEGTICKRARGDDMDDYCNGKTCDCPRNPHKGP. Intrachain disulfides connect C5–C14, C10–C35, C11–C40, and C23–C42. The short motif at 27-29 is the Cell attachment site element; it reads RGD.

Belongs to the venom metalloproteinase (M12B) family. P-II subfamily. P-IIa sub-subfamily. As to quaternary structure, monomer. As to expression, expressed by the venom gland.

The protein resides in the secreted. Inhibits ADP-induced human, canine and rabbit platelet aggregation by binding with high affinity to alpha-IIb/beta-3 (ITGA2B/ITGB3). The chain is Disintegrin multisquamatin from Echis multisquamatus (Central Asian sand viper).